We begin with the raw amino-acid sequence, 468 residues long: COBRA-like protein 5 (468 aa).

The first 22 residues, 1–22 (MELHRCSLLALLLAVTCSVAVA), serve as a signal peptide directing secretion. 4 N-linked (GlcNAc...) asparagine glycosylation sites follow: asparagine 31, asparagine 156, asparagine 164, and asparagine 228. The tract at residues 251-278 (GGGKNARAGDGRSRRNSGGGGGHSGGTE) is disordered. Asparagine 340, asparagine 355, and asparagine 374 each carry an N-linked (GlcNAc...) asparagine glycan. Asparagine 443 carries the GPI-anchor amidated asparagine lipid modification. The propeptide at 444–468 (SAPIGPPRSVAAAASAILVVLLLVA) is removed in mature form.

The protein belongs to the COBRA family. In terms of tissue distribution, expressed mainly in developing sclerenchyma cells and in vascular bundles.

It localises to the cell membrane. Its function is as follows. Involved in determining the orientation of cell expansion, probably by playing an important role in cellulose deposition. May act by recruiting cellulose synthesizing complexes to discrete positions on the cell surface. This chain is COBRA-like protein 5 (BC1), found in Oryza sativa subsp. indica (Rice).